The following is a 240-amino-acid chain: Zinc finger CCCH domain-containing protein 52 (240 aa).

2 disordered regions span residues 1 to 37 (MDARKRGRPEAAASHNSNGGFKRSKQEMESISTGLGS) and 81 to 106 (SQVSRNMQGSGGPGGRFSGRGDPGSG). A C3H1-type 1 zinc finger spans residues 36–64 (GSKSKPCTKFFSTSGCPFGDNCHFLHYVP). Residues 89–104 (GSGGPGGRFSGRGDPG) are compositionally biased toward gly residues. The KH domain occupies 113-177 (ASTSKISVDA…EQINVASGMV (65 aa)). The segment at 205–232 (NYKTKICDRYSKGNCTYGDRCHFAHGES) adopts a C3H1-type 2 zinc-finger fold.

In Arabidopsis thaliana (Mouse-ear cress), this protein is Zinc finger CCCH domain-containing protein 52.